The following is a 209-amino-acid chain: Uracil phosphoribosyltransferase (209 aa).

5-phospho-alpha-D-ribose 1-diphosphate contacts are provided by residues arginine 79, arginine 104, and 131-139 (DPMLATGGS). Residues isoleucine 194 and 199–201 (GDA) each bind uracil. Aspartate 200 is a binding site for 5-phospho-alpha-D-ribose 1-diphosphate.

This sequence belongs to the UPRTase family. It depends on Mg(2+) as a cofactor.

It carries out the reaction UMP + diphosphate = 5-phospho-alpha-D-ribose 1-diphosphate + uracil. Its pathway is pyrimidine metabolism; UMP biosynthesis via salvage pathway; UMP from uracil: step 1/1. Allosterically activated by GTP. Catalyzes the conversion of uracil and 5-phospho-alpha-D-ribose 1-diphosphate (PRPP) to UMP and diphosphate. In Shouchella clausii (strain KSM-K16) (Alkalihalobacillus clausii), this protein is Uracil phosphoribosyltransferase.